A 225-amino-acid chain; its full sequence is Histone H3-like centromeric protein cid (225 aa).

The segment covering 1-11 (MPRHSRAKRAP) has biased composition (basic residues). The interval 1 to 131 (MPRHSRAKRA…KAANPMSRAK (131 aa)) is disordered. Residues 43-52 (FTTSQLTLQD) are compositionally biased toward polar residues. Phosphoserine is present on residues S74 and S75. T76 carries the phosphothreonine modification. S77 carries the post-translational modification Phosphoserine. A compositionally biased stretch (polar residues) spans 86 to 103 (RYPTTRSPQTRRMTVQQE). An H3-like region spans residues 133–225 (MDREIRRLQH…AYICDRGRQF (93 aa)).

This sequence belongs to the histone H3 family. Forms a nucleosome-like histone octamer containing two molecules each of H2A, H2B, cid and H4 assembled in one cid-H4 heterotetramer and two H2A-H2B heterodimers. The cid-H4 heterotetramer is more compact and structurally more rigid than corresponding H3-H4 heterotetramers. Interacts with the condensin subunit Cap-G. Interacts with Chrac-14.

Its subcellular location is the nucleus. The protein resides in the chromosome. It localises to the centromere. The protein localises to the kinetochore. In terms of biological role, histone H3-like variant which exclusively replaces conventional H3 in the nucleosome core of centromeric chromatin at the inner plate of the kinetochore. Required for recruitment and assembly of kinetochore proteins, mitotic progression and chromosome segregation. May serve as an epigenetic mark that propagates centromere identity through replication and cell division. The sequence is that of Histone H3-like centromeric protein cid from Drosophila melanogaster (Fruit fly).